The following is a 177-amino-acid chain: Ribulose bisphosphate carboxylase small subunit, chloroplastic 5 (177 aa).

The N-terminal 56 residues, 1 to 56 (MASSMMASTAAVARAGPAQSSMVAPFNGLRSSVAFPATRKANNDLSTLPSNGGRVS), are a transit peptide targeting the chloroplast.

The protein belongs to the RuBisCO small chain family. Heterohexadecamer of 8 large and 8 small subunits.

Its subcellular location is the plastid. It is found in the chloroplast. Functionally, ruBisCO catalyzes two reactions: the carboxylation of D-ribulose 1,5-bisphosphate, the primary event in carbon dioxide fixation, as well as the oxidative fragmentation of the pentose substrate. Both reactions occur simultaneously and in competition at the same active site. Although the small subunit is not catalytic it is essential for maximal activity. In Lemna gibba (Swollen duckweed), this protein is Ribulose bisphosphate carboxylase small subunit, chloroplastic 5.